The sequence spans 346 residues: Cell division protein FtsZ 2 (346 aa).

GTP-binding positions include 23–27, 110–112, glutamate 141, arginine 145, and aspartate 189; these read GGGGN and GTG. The interval 320–346 is disordered; the sequence is SNRSAQPTAPEAMNGQTAAAVPSRTLQ.

It belongs to the FtsZ family. As to quaternary structure, homodimer. Polymerizes to form a dynamic ring structure in a strictly GTP-dependent manner. Interacts directly with several other division proteins.

It is found in the cytoplasm. Functionally, essential cell division protein that forms a contractile ring structure (Z ring) at the future cell division site. The regulation of the ring assembly controls the timing and the location of cell division. One of the functions of the FtsZ ring is to recruit other cell division proteins to the septum to produce a new cell wall between the dividing cells. Binds GTP and shows GTPase activity. The polypeptide is Cell division protein FtsZ 2 (Rhizobium meliloti (strain 1021) (Ensifer meliloti)).